The sequence spans 270 residues: Probable inositol 1-monophosphatase ImpA (270 aa).

Glu69, Asp85, Ile87, and Asp88 together coordinate Mg(2+). Substrate is bound at residue Glu69. Substrate contacts are provided by residues 87–90 (IDGT), Arg187, and Asp216. Asp216 lines the Mg(2+) pocket.

It belongs to the inositol monophosphatase superfamily. It depends on Mg(2+) as a cofactor.

It carries out the reaction a myo-inositol phosphate + H2O = myo-inositol + phosphate. The protein operates within polyol metabolism; myo-inositol biosynthesis; myo-inositol from D-glucose 6-phosphate: step 2/2. Catalyzes the dephosphorylation of inositol 1-phosphate (I-1-P) to yield free myo-inositol, a key metabolite in mycobacteria. The sequence is that of Probable inositol 1-monophosphatase ImpA (impA) from Mycobacterium tuberculosis (strain ATCC 25618 / H37Rv).